A 245-amino-acid chain; its full sequence is Phosphoadenosine 5'-phosphosulfate reductase (245 aa).

Cysteine 239 (nucleophile; cysteine thiosulfonate intermediate) is an active-site residue.

Belongs to the PAPS reductase family. CysH subfamily.

The protein resides in the cytoplasm. It carries out the reaction [thioredoxin]-disulfide + sulfite + adenosine 3',5'-bisphosphate + 2 H(+) = [thioredoxin]-dithiol + 3'-phosphoadenylyl sulfate. It functions in the pathway sulfur metabolism; hydrogen sulfide biosynthesis; sulfite from sulfate: step 3/3. In terms of biological role, catalyzes the formation of sulfite from phosphoadenosine 5'-phosphosulfate (PAPS) using thioredoxin as an electron donor. The protein is Phosphoadenosine 5'-phosphosulfate reductase of Baumannia cicadellinicola subsp. Homalodisca coagulata.